Here is a 397-residue protein sequence, read N- to C-terminus: Arginine biosynthesis bifunctional protein ArgJ (397 aa).

Positions 143, 169, 180, 266, 392, and 397 each coordinate substrate. Threonine 180 acts as the Nucleophile in catalysis.

It belongs to the ArgJ family. In terms of assembly, heterotetramer of two alpha and two beta chains.

Its subcellular location is the cytoplasm. It carries out the reaction N(2)-acetyl-L-ornithine + L-glutamate = N-acetyl-L-glutamate + L-ornithine. The catalysed reaction is L-glutamate + acetyl-CoA = N-acetyl-L-glutamate + CoA + H(+). It functions in the pathway amino-acid biosynthesis; L-arginine biosynthesis; L-ornithine and N-acetyl-L-glutamate from L-glutamate and N(2)-acetyl-L-ornithine (cyclic): step 1/1. The protein operates within amino-acid biosynthesis; L-arginine biosynthesis; N(2)-acetyl-L-ornithine from L-glutamate: step 1/4. Its activity is regulated as follows. Competitively inhibited by L-ornithine. Catalyzes two activities which are involved in the cyclic version of arginine biosynthesis: the synthesis of N-acetylglutamate from glutamate and acetyl-CoA as the acetyl donor, and of ornithine by transacetylation between N(2)-acetylornithine and glutamate. The protein is Arginine biosynthesis bifunctional protein ArgJ of Thermotoga neapolitana (strain ATCC 49049 / DSM 4359 / NBRC 107923 / NS-E).